The sequence spans 528 residues: MSGSDTAPFLSQADDTDDGPAPGTPGLPGSMGNPKSEDPAVPDQEGLQRITGLSSGHSALIVAVLCYINLLNYMDRFTVAGVLPDIEQFFDIGDGSSGLIQTVFISSYMVLAPVFGYLGDRYNRKYLMCGGIAFWSLVTLGSSFIPRERFWLLLLTRGLVGVGEASYSTIAPTLIADLFVADQRSRMLSVFYFAIPVGSGLGYIAGSKVKDVAGDWHWALRVTPGLGVLAVVLLFLVVQEPPRGAVERHSDSPPLNPTSWWADLRALARNPSFILSSLGFTAVAFVTGSLALWAPAFLLRSRVVLGETPPCLPGDSCSSSDSLIFGLITCLTGVLGVGLGVEISRRLRRTNPRADPLVCAAGLLGSAPFLFLALACARGSIVATYIFIFIGETLLSMNWAIVADILLYVVIPTRRSTAEAFQIVLSHLLGDAGSPYLIGSISDRLRRDWPPSFLSEFRALQFSLMLCAFVGALGGAAFLGTAIFIESDRRQAQLHVQGLLPETGPTDDRIVVPQRGRSTRVPVSSVLI.

Positions 1–44 (MSGSDTAPFLSQADDTDDGPAPGTPGLPGSMGNPKSEDPAVPDQ) are disordered. 12 helical membrane-spanning segments follow: residues 50-70 (ITGL…YINL), 98-118 (GLIQ…FGYL), 126-146 (YLMC…SFIP), 160-180 (VGVG…DLFV), 187-207 (MLSV…IAGS), 218-238 (WALR…FLVV), 278-298 (LGFT…PAFL), 323-343 (LIFG…GVEI), 357-377 (LVCA…LACA), 381-401 (IVAT…NWAI), 421-441 (FQIV…IGSI), and 465-485 (MLCA…AIFI). S518 is modified (phosphoserine).

It belongs to the major facilitator superfamily. Spinster (TC 2.A.1.49) family. As to quaternary structure, interacts with BCL2 and BCL2L1.

It is found in the lysosome membrane. The enzyme catalyses a 1-acyl-sn-glycero-3-phosphocholine(out) + H(+)(out) = a 1-acyl-sn-glycero-3-phosphocholine(in) + H(+)(in). It carries out the reaction 1-hexadecanoyl-sn-glycero-3-phosphocholine(out) + H(+)(out) = 1-hexadecanoyl-sn-glycero-3-phosphocholine(in) + H(+)(in). The catalysed reaction is 1-(9Z-octadecenoyl)-sn-glycero-3-phosphocholine(out) + H(+)(out) = 1-(9Z-octadecenoyl)-sn-glycero-3-phosphocholine(in) + H(+)(in). It catalyses the reaction 1-(5Z,8Z,11Z,14Z-eicosatetraenoyl)-sn-glycero-3-phosphocholine(out) + H(+)(out) = 1-(5Z,8Z,11Z,14Z-eicosatetraenoyl)-sn-glycero-3-phosphocholine(in) + H(+)(in). The enzyme catalyses 1-(4Z,7Z,10Z,13Z,16Z,19Z-docosahexaenoyl)-sn-glycero-3-phosphocholine(out) + H(+)(out) = 1-(4Z,7Z,10Z,13Z,16Z,19Z-docosahexaenoyl)-sn-glycero-3-phosphocholine(in) + H(+)(in). It carries out the reaction a 1-acyl-sn-glycero-3-phosphoethanolamine(out) + H(+)(out) = a 1-acyl-sn-glycero-3-phosphoethanolamine(in) + H(+)(in). The catalysed reaction is 1-(9Z-octadecenoyl)-sn-glycero-3-phosphoethanolamine(out) + H(+)(out) = 1-(9Z-octadecenoyl)-sn-glycero-3-phosphoethanolamine(in) + H(+)(in). It catalyses the reaction 1-acyl-sn-glycero-3-phospho-(1'-sn-glycerol)(out) + H(+)(out) = 1-acyl-sn-glycero-3-phospho-(1'-sn-glycerol)(in) + H(+)(in). The enzyme catalyses 1-(9Z-octadecenoyl)-sn-glycero-3-phospho-(1'-sn-glycerol)(out) + H(+)(out) = 1-(9Z-octadecenoyl)-sn-glycero-3-phospho-(1'-sn-glycerol)(in) + H(+)(in). It carries out the reaction a 1-O-(1Z-alkenyl)-sn-glycero-3-phosphocholine(out) + H(+)(out) = a 1-O-(1Z-alkenyl)-sn-glycero-3-phosphocholine(in) + H(+)(in). The catalysed reaction is 1-(1Z-hexadecenyl)-sn-glycero-3-phosphocholine(out) + H(+)(out) = 1-(1Z-hexadecenyl)-sn-glycero-3-phosphocholine(in) + H(+)(in). It catalyses the reaction a 1-O-(1Z-alkenyl)-sn-glycero-3-phosphoethanolamine(out) + H(+)(out) = a 1-O-(1Z-alkenyl)-sn-glycero-3-phosphoethanolamine(in) + H(+)(in). The enzyme catalyses 1-O-(1Z-hexadecenyl)-sn-glycero-3-phosphoethanolamine(out) + H(+)(out) = 1-O-(1Z-hexadecenyl)-sn-glycero-3-phosphoethanolamine(in) + H(+)(in). In terms of biological role, plays a critical role in the phospholipid salvage pathway from lysosomes to the cytosol. Mediates the rate-limiting, proton-dependent, lysosomal efflux of lysophospholipids, which can then be reacylated by acyltransferases in the endoplasmic reticulum to form phospholipids. Selective for zwitterionic headgroups such as lysophosphatidylcholine (LPC) and lysophosphatidylethanolamine (LPE), can also transport lysophosphatidylglycerol (LPG), but not other anionic lysophospholipids, sphingosine, nor sphingomyelin. Transports lysophospholipids with saturated, monounsaturated, and polyunsaturated fatty acids, such as 1-hexadecanoyl-sn-glycero-3-phosphocholine, 1-(9Z-octadecenoyl)-sn-glycero-3-phosphocholine and 1-(4Z,7Z,10Z,13Z,16Z,19Z-docosahexaenoyl)-sn-glycero-3-phosphocholine, respectively. Can also transport lysoplasmalogen (LPC with a fatty alcohol) such as 1-(1Z-hexadecenyl)-sn-glycero-3-phosphocholine. Essential player in lysosomal homeostasis. Crucial for cell survival under conditions of nutrient limitation. May be involved in necrotic or autophagic cell death. The polypeptide is Protein spinster homolog 1 (SPNS1) (Bos taurus (Bovine)).